Consider the following 291-residue polypeptide: Pantothenate synthetase (291 aa).

30–37 (MGYLHVGH) is an ATP binding site. Histidine 37 functions as the Proton donor in the catalytic mechanism. Residue glutamine 61 participates in (R)-pantoate binding. Beta-alanine is bound at residue glutamine 61. 147–150 (GEKD) contributes to the ATP binding site. A (R)-pantoate-binding site is contributed by glutamine 153. ATP is bound by residues valine 176 and 184–187 (CSSR).

This sequence belongs to the pantothenate synthetase family. As to quaternary structure, homodimer.

The protein localises to the cytoplasm. The enzyme catalyses (R)-pantoate + beta-alanine + ATP = (R)-pantothenate + AMP + diphosphate + H(+). It functions in the pathway cofactor biosynthesis; (R)-pantothenate biosynthesis; (R)-pantothenate from (R)-pantoate and beta-alanine: step 1/1. Catalyzes the condensation of pantoate with beta-alanine in an ATP-dependent reaction via a pantoyl-adenylate intermediate. This Sinorhizobium medicae (strain WSM419) (Ensifer medicae) protein is Pantothenate synthetase.